The sequence spans 182 residues: UPF0397 protein BCA_2731 (182 aa).

5 helical membrane passes run V9 to I29, A40 to I60, W71 to I91, I114 to V134, and I142 to L162.

It belongs to the UPF0397 family.

The protein resides in the cell membrane. This chain is UPF0397 protein BCA_2731, found in Bacillus cereus (strain 03BB102).